Here is a 149-residue protein sequence, read N- to C-terminus: MFDGIGFMELLLIGVLGLIVLGPERLPVAVRSVTSWVRAMKRMANSVKEELEQELKIEQLHADLKKAESKGLSNLSPELQESIEQLKQAAQSVNRPYQVQDTPSAQDNQIHNPASQTVSTEASSTSASSAPKSESIQGEDPRSNTKANG.

Residues 1–22 (MFDGIGFMELLLIGVLGLIVLG) traverse the membrane as a helical segment. Residues 86-113 (LKQAAQSVNRPYQVQDTPSAQDNQIHNP) show a composition bias toward polar residues. Positions 86 to 149 (LKQAAQSVNR…DPRSNTKANG (64 aa)) are disordered. The span at 114-135 (ASQTVSTEASSTSASSAPKSES) shows a compositional bias: low complexity.

This sequence belongs to the TatB family. In terms of assembly, the Tat system comprises two distinct complexes: a TatABC complex, containing multiple copies of TatA, TatB and TatC subunits, and a separate TatA complex, containing only TatA subunits. Substrates initially bind to the TatABC complex, which probably triggers association of the separate TatA complex to form the active translocon.

It is found in the cell inner membrane. Functionally, part of the twin-arginine translocation (Tat) system that transports large folded proteins containing a characteristic twin-arginine motif in their signal peptide across membranes. Together with TatC, TatB is part of a receptor directly interacting with Tat signal peptides. TatB may form an oligomeric binding site that transiently accommodates folded Tat precursor proteins before their translocation. The protein is Sec-independent protein translocase protein TatB of Shewanella oneidensis (strain ATCC 700550 / JCM 31522 / CIP 106686 / LMG 19005 / NCIMB 14063 / MR-1).